The following is a 345-amino-acid chain: DNA-directed RNA polymerase subunit alpha (345 aa).

An alpha N-terminal domain (alpha-NTD) region spans residues 1 to 234; sequence MRKNEMSTSK…DLLTTFLYVR (234 aa). The alpha C-terminal domain (alpha-CTD) stretch occupies residues 266-345; the sequence is LEERVLENRF…DKKIVLNRRK (80 aa).

This sequence belongs to the RNA polymerase alpha chain family. In plastids the minimal PEP RNA polymerase catalytic core is composed of four subunits: alpha, beta, beta', and beta''. When a (nuclear-encoded) sigma factor is associated with the core the holoenzyme is formed, which can initiate transcription.

Its subcellular location is the plastid. The protein resides in the chloroplast. The enzyme catalyses RNA(n) + a ribonucleoside 5'-triphosphate = RNA(n+1) + diphosphate. Its function is as follows. DNA-dependent RNA polymerase catalyzes the transcription of DNA into RNA using the four ribonucleoside triphosphates as substrates. This chain is DNA-directed RNA polymerase subunit alpha, found in Adiantum capillus-veneris (Maidenhair fern).